A 445-amino-acid chain; its full sequence is C4-dicarboxylate transport protein (445 aa).

A run of 8 helical transmembrane segments spans residues 24 to 44, 62 to 82, 105 to 125, 163 to 183, 201 to 221, 237 to 257, 322 to 342, and 370 to 390; these read VLYV…WVSP, LIKM…IAHI, FALI…GLAA, GDIL…MALG, FGVI…AMAF, LVAL…GLIA, IYMT…LTFT, and AGTL…VFSI.

The protein belongs to the dicarboxylate/amino acid:cation symporter (DAACS) (TC 2.A.23) family.

It is found in the cell inner membrane. Responsible for the transport of dicarboxylates such as succinate, fumarate, and malate from the periplasm across the membrane. The chain is C4-dicarboxylate transport protein from Rhodopseudomonas palustris (strain BisB5).